The following is a 414-amino-acid chain: Ornithine aminotransferase (414 aa).

Residues Cys-154 and Cys-163 are joined by a disulfide bond. Lys-262 carries the post-translational modification N6-(pyridoxal phosphate)lysine.

Belongs to the class-III pyridoxal-phosphate-dependent aminotransferase family. In terms of assembly, homodimer. Pyridoxal 5'-phosphate serves as cofactor. In terms of processing, the disulfide bond between Cys-154 and Cys-163 is reduced by TRX1 which increases OAT catalytic activity.

It is found in the cytoplasm. It catalyses the reaction a 2-oxocarboxylate + L-ornithine = L-glutamate 5-semialdehyde + an L-alpha-amino acid. It carries out the reaction L-ornithine + 2-oxoglutarate = L-glutamate 5-semialdehyde + L-glutamate. It functions in the pathway amino-acid biosynthesis; L-proline biosynthesis; L-glutamate 5-semialdehyde from L-ornithine: step 1/1. Its activity is regulated as follows. Unlike for mammalian OATs, activity is increased by TRX1-mediated reduction of the disulfide bond between Cys-154 and Cys-163. Binding to TRX1 may also induce conformational changes that facilitate substrate binding. Its function is as follows. The enzyme has a very narrow substrate specificity and can only catalyze the transamination of alpha-ketoglutarate with ornithine or N-acetylornithine and, to a lesser extent, of glutamate-5-semialdehyde with glutamate and alanine. This chain is Ornithine aminotransferase, found in Plasmodium falciparum (isolate 3D7).